We begin with the raw amino-acid sequence, 275 residues long: COP9 signalosome complex subunit 7a (275 aa).

Position 2 is an N-acetylserine (Ser-2). The region spanning 2–159 (SAEVKVTGQN…QRLEVDYSIG (158 aa)) is the PCI domain. Residues 185–233 (LSGIEEQVSRANQHKEQQLGLKQQIESEVANLKKTIKVTTAAAAAATSQ) adopt a coiled-coil conformation. The tract at residues 228–275 (AAATSQDPEQHLTELREPASGTNQRQPSKKASKGKGLRGSAKIWSKSN) is disordered. Residues 235-244 (PEQHLTELRE) show a composition bias toward basic and acidic residues. Residues 254–263 (PSKKASKGKG) are compositionally biased toward basic residues.

This sequence belongs to the CSN7/EIF3M family. CSN7 subfamily. In terms of assembly, component of the CSN complex, composed of COPS1/GPS1, COPS2, COPS3, COPS4, COPS5, COPS6, COPS7 (COPS7A or COPS7B), COPS8 and COPS9. In the complex, it probably interacts directly with COPS1, COPS2, COPS4, COPS5, COPS6 and COPS8. Interacts with PMF1. Interacts with the translation initiation factor EIF3S6. Interacts with CK2 and PKD. Interacts directly with ID3. In terms of processing, phosphorylated by CK2 and PKD kinases.

It localises to the cytoplasm. The protein localises to the nucleus. Component of the COP9 signalosome complex (CSN), a complex involved in various cellular and developmental processes. The CSN complex is an essential regulator of the ubiquitin (Ubl) conjugation pathway by mediating the deneddylation of the cullin subunits of SCF-type E3 ligase complexes, leading to decrease the Ubl ligase activity of SCF-type complexes such as SCF, CSA or DDB2. The complex is also involved in phosphorylation of p53/TP53, JUN, I-kappa-B-alpha/NFKBIA, ITPK1 and IRF8/ICSBP, possibly via its association with CK2 and PKD kinases. CSN-dependent phosphorylation of TP53 and JUN promotes and protects degradation by the Ubl system, respectively. This chain is COP9 signalosome complex subunit 7a (Cops7a), found in Mus musculus (Mouse).